Here is an 833-residue protein sequence, read N- to C-terminus: Leucine--tRNA ligase (833 aa).

The 'HIGH' region signature appears at P41 to H52. The 'KMSKS' region signature appears at K610–S614. K613 lines the ATP pocket.

Belongs to the class-I aminoacyl-tRNA synthetase family.

The protein resides in the cytoplasm. It catalyses the reaction tRNA(Leu) + L-leucine + ATP = L-leucyl-tRNA(Leu) + AMP + diphosphate. This chain is Leucine--tRNA ligase, found in Streptococcus agalactiae serotype Ia (strain ATCC 27591 / A909 / CDC SS700).